Consider the following 88-residue polypeptide: Apolipoprotein C-I (88 aa).

The signal sequence occupies residues 1–26 (MRLFLSLPVLVVVLAMVWEGPAPTQA).

It belongs to the apolipoprotein C1 family.

It localises to the secreted. Functionally, inhibitor of lipoprotein binding to the low density lipoprotein (LDL) receptor, LDL receptor-related protein, and very low density lipoprotein (VLDL) receptor. Associates with high density lipoproteins (HDL) and the triacylglycerol-rich lipoproteins in the plasma and makes up about 10% of the protein of the VLDL and 2% of that of HDL. Appears to interfere directly with fatty acid uptake and is also the major plasma inhibitor of cholesteryl ester transfer protein (CETP). Binds free fatty acids and reduces their intracellular esterification. Modulates the interaction of APOE with beta-migrating VLDL and inhibits binding of beta-VLDL to the LDL receptor-related protein. This Neomonachus schauinslandi (Hawaiian monk seal) protein is Apolipoprotein C-I (APOC1).